Consider the following 451-residue polypeptide: Phosphoglucosamine mutase (451 aa).

Residue S102 is the Phosphoserine intermediate of the active site. Mg(2+) contacts are provided by S102, D242, D244, and D246. S102 is modified (phosphoserine).

The protein belongs to the phosphohexose mutase family. Requires Mg(2+) as cofactor. Post-translationally, activated by phosphorylation.

It catalyses the reaction alpha-D-glucosamine 1-phosphate = D-glucosamine 6-phosphate. Functionally, catalyzes the conversion of glucosamine-6-phosphate to glucosamine-1-phosphate. The sequence is that of Phosphoglucosamine mutase from Staphylococcus saprophyticus subsp. saprophyticus (strain ATCC 15305 / DSM 20229 / NCIMB 8711 / NCTC 7292 / S-41).